The primary structure comprises 416 residues: Phakinin (416 aa).

The tract at residues 1–48 is disordered; sequence MSKRRVAADLPSGTNSSMPVQRHRVSSLRGTHSPSSLDSPPASRTSAV. Ser2 is modified (N-acetylserine). The head stretch occupies residues 2-115; the sequence is SKRRVAADLP…HTTVEDLGGC (114 aa). Phosphoserine occurs at positions 27, 33, 36, and 91. Over residues 28–48 the composition is skewed to polar residues; sequence LRGTHSPSSLDSPPASRTSAV. The IF rod domain maps to 105–416; it reads DHTTVEDLGG…HALLDREENN (312 aa). 3 coiled-coil regions span residues 116-146, 170-249, and 308-402; these read LVEY…SKAK, LENA…VKVL, and QTQE…LQKD. A tail region spans residues 397–416; the sequence is SQLQKDVASYHALLDREENN.

The protein belongs to the intermediate filament family. In terms of assembly, part of a complex required for lens intermediate filament formation composed of BFSP1, BFSP2 and CRYAA. Found in a complex composed of PPL (via C-terminal linker domain), BFSP1 and BFSP2 in the retinal lens. Within the complex interacts with PPL (via C-terminal linker domain) and with BFSP1. Identified in a complex that contains VIM, EZR, AHNAK, BFSP1, BFSP2, ANK2, PLEC, PRX and spectrin. Interacts with LGSN. Interacts with VIM. As to expression, detected in retina lens fiber cells (at protein level). Also expressed in the lens epithelium, abundantly expressed in the anterior and anterolateral epithelium, less frequently expressed nearer the lens coronal equator (at protein level).

Its subcellular location is the cell membrane. The protein localises to the cytoplasm. It is found in the cytoskeleton. The protein resides in the cell cortex. Required for the correct formation of lens intermediate filaments as part of a complex composed of BFSP1, BFSP2 and CRYAA. Plays a role in maintenance of retinal lens optical clarity. The polypeptide is Phakinin (Bfsp2) (Mus musculus (Mouse)).